The primary structure comprises 485 residues: Glutamate--tRNA ligase (485 aa).

The 'HIGH' region signature appears at 11–21 (PSPTGHLHIGN). Residues 252–256 (KLSKR) carry the 'KMSKS' region motif. Lysine 255 serves as a coordination point for ATP.

This sequence belongs to the class-I aminoacyl-tRNA synthetase family. Glutamate--tRNA ligase type 1 subfamily. Monomer.

Its subcellular location is the cytoplasm. The catalysed reaction is tRNA(Glu) + L-glutamate + ATP = L-glutamyl-tRNA(Glu) + AMP + diphosphate. In terms of biological role, catalyzes the attachment of glutamate to tRNA(Glu) in a two-step reaction: glutamate is first activated by ATP to form Glu-AMP and then transferred to the acceptor end of tRNA(Glu). This chain is Glutamate--tRNA ligase, found in Bacillus cereus (strain ATCC 14579 / DSM 31 / CCUG 7414 / JCM 2152 / NBRC 15305 / NCIMB 9373 / NCTC 2599 / NRRL B-3711).